Here is a 173-residue protein sequence, read N- to C-terminus: MDVTIQHPWFKRALGPFYPSRLFDQFFGEGLFEYDLLPFLSSTISPYYRQSLFRTVLDSGISEVRSDRDKFVIFLDVKHFSPEDLTVKVQEDFVEIHGKHSERQDDHGYISREFHRRYRLPSNVDQSALSCSLSADGMLTFSGPKVQSGLDAGHSERAIPVSREEKPSSAPSS.

Met1 is modified (N-acetylmethionine). The tract at residues 1 to 63 (MDVTIQHPWF…RTVLDSGISE (63 aa)) is required for complex formation with BFSP1 and BFSP2. A Deamidated glutamine; partial modification is found at Gln6. Ser45 is subject to Phosphoserine. A Deamidated glutamine; partial modification is found at Gln50. Positions 52–162 (LFRTVLDSGI…GHSERAIPVS (111 aa)) constitute a sHSP domain. Lys70 bears the N6-acetyllysine mark. Gln90 carries the deamidated glutamine; partial modification. Lys99 carries the N6-acetyllysine modification. Zn(2+) is bound by residues His100, Glu102, and His107. Ser122 bears the Phosphoserine mark. Asn123 is subject to Deamidated asparagine; partial. The tract at residues 145-173 (KVQSGLDAGHSERAIPVSREEKPSSAPSS) is disordered. At Gln147 the chain carries Deamidated glutamine; partial. The span at 153 to 167 (GHSERAIPVSREEKP) shows a compositional bias: basic and acidic residues. His154 lines the Zn(2+) pocket. Residue Ser162 is glycosylated (O-linked (GlcNAc) serine).

This sequence belongs to the small heat shock protein (HSP20) family. In terms of assembly, heteromer composed of three CRYAA and one CRYAB subunits. Inter-subunit bridging via zinc ions enhances stability, which is crucial as there is no protein turn over in the lens. Can also form homodimers and homotetramers (dimers of dimers) which serve as the building blocks of homooligomers. Within homooligomers, the zinc-binding motif is created from residues of 3 different molecules. His-100 and Glu-102 from one molecule are ligands of the zinc ion, and His-107 and His-154 residues from additional molecules complete the site with tetrahedral coordination geometry. Part of a complex required for lens intermediate filament formation composed of BFSP1, BFSP2 and CRYAA. Acetylation at Lys-70 may increase chaperone activity. Post-translationally, undergoes age-dependent proteolytical cleavage at the C-terminus.

Its subcellular location is the cytoplasm. The protein localises to the nucleus. Functionally, contributes to the transparency and refractive index of the lens. Acts as a chaperone, preventing aggregation of various proteins under a wide range of stress conditions. Required for the correct formation of lens intermediate filaments as part of a complex composed of BFSP1, BFSP2 and CRYAA. This is Alpha-crystallin A chain (CRYAA) from Ochotona princeps (Southern American pika).